Reading from the N-terminus, the 280-residue chain is Truncated lectin 2 (280 aa).

The first 26 residues, 1–26 (MSSSNFSCILSISLTFFILLLNKVNS), serve as a signal peptide directing secretion. Mn(2+) is bound by residues Glu-148 and Asp-150. Residues Asp-150, Phe-152, Asn-154, and Asp-158 each contribute to the Ca(2+) site. Asp-158 lines the Mn(2+) pocket. A glycan (N-linked (GlcNAc...) asparagine) is linked at Asn-163. His-170 contributes to the Mn(2+) binding site. A glycan (N-linked (GlcNAc...) asparagine) is linked at Asn-272.

It belongs to the leguminous lectin family.

This is Truncated lectin 2 (LEC2) from Medicago truncatula (Barrel medic).